The following is a 158-amino-acid chain: CD-NTase/cGAS isopeptidase (158 aa).

The active-site Proton donor/acceptor is glutamate 38. Zn(2+)-binding residues include histidine 100, histidine 102, and aspartate 113.

The protein belongs to the peptidase M67B family. Cap3 isopeptidase subfamily.

In terms of biological role, metalloprotease priming reversal component of a CBASS antivirus system. CBASS (cyclic oligonucleotide-based antiphage signaling system) provides immunity against bacteriophages. The CD-NTase protein synthesizes cyclic nucleotides in response to infection; these serve as specific second messenger signals. The signals activate a diverse range of effectors, leading to bacterial cell death and thus abortive phage infection. A type II-A(GA) CBASS system. Its function is as follows. Reverses the primed state of CdnA, the CD-NTase. The capV-cdnA-cap2-cap3 operon provides about 10(4)-fold protection in strain BWHPSA011 against infection by phage PaMx41. In P.aeruginosa strain PAO1 it confers protection against phages PaMx41 and JBD18 but not JBD67 (JBD18 and JBD67 do not replicate in BWHPSA011 / Pa011). When acb2 in JBD67 is deleted this CBASS operon then protects against JDB67 also. This CBASS system limits prophage induction of lysogenized JBD67 as well as viral lytic replication. The chain is CD-NTase/cGAS isopeptidase from Pseudomonas aeruginosa (strain BWHPSA011 / Pa011).